The sequence spans 664 residues: Xyloglucan-specific galacturonosyltransferase 1 (664 aa).

Basic residues predominate over residues 1 to 21 (MSLSKHLQKLVHKRESKKQPN). Positions 1 to 49 (MSLSKHLQKLVHKRESKKQPNKKMPVSVSKLRRPRTSKKTETGNPEKTL) are disordered. At 1–71 (MSLSKHLQKL…IFSARSFLYR (71 aa)) the chain is on the cytoplasmic side. A helical; Signal-anchor for type II membrane protein membrane pass occupies residues 72 to 92 (VPLTILFLFLIYLWSTSTTVI). The Lumenal portion of the chain corresponds to 93–664 (SGNVVHICIS…SLFKKIAKTV (572 aa)). N-linked (GlcNAc...) asparagine glycosylation is found at Asn126, Asn158, Asn175, Asn181, Asn355, Asn379, and Asn522.

This sequence belongs to the glycosyltransferase 47 family. As to expression, root hair specific. Expressed in roots and young leaves.

It localises to the golgi apparatus membrane. Functionally, xyloglucan-specific galacturonosyltransferase that forms the beta-D-galactosyluronic acid-(1-&gt;2)-alpha-D-xylosyl linkage. Required for root hair development probably by providing important acidic xyloglucans. The sequence is that of Xyloglucan-specific galacturonosyltransferase 1 from Arabidopsis thaliana (Mouse-ear cress).